The sequence spans 439 residues: tRNA-2-methylthio-N(6)-dimethylallyladenosine synthase (439 aa).

Residues 2-115 (KGLYIKTYGC…LPELIVKASR (114 aa)) enclose the MTTase N-terminal domain. Positions 11, 47, 78, 155, 159, and 162 each coordinate [4Fe-4S] cluster. One can recognise a Radical SAM core domain in the interval 141–372 (NSQGSSAFLA…QKLISKQQLE (232 aa)). A TRAM domain is found at 375–439 (QSMVGKTIPV…QSSLLGCAFH (65 aa)).

It belongs to the methylthiotransferase family. MiaB subfamily. As to quaternary structure, monomer. The cofactor is [4Fe-4S] cluster.

It is found in the cytoplasm. It catalyses the reaction N(6)-dimethylallyladenosine(37) in tRNA + (sulfur carrier)-SH + AH2 + 2 S-adenosyl-L-methionine = 2-methylsulfanyl-N(6)-dimethylallyladenosine(37) in tRNA + (sulfur carrier)-H + 5'-deoxyadenosine + L-methionine + A + S-adenosyl-L-homocysteine + 2 H(+). In terms of biological role, catalyzes the methylthiolation of N6-(dimethylallyl)adenosine (i(6)A), leading to the formation of 2-methylthio-N6-(dimethylallyl)adenosine (ms(2)i(6)A) at position 37 in tRNAs that read codons beginning with uridine. The protein is tRNA-2-methylthio-N(6)-dimethylallyladenosine synthase of Wolbachia pipientis wMel.